A 176-amino-acid chain; its full sequence is Cytochrome b561 homolog 1 (176 aa).

Topologically, residues Met-1–Thr-7 are cytoplasmic. A helical membrane pass occupies residues Gln-8–Leu-28. His-12 contacts heme b. The Periplasmic portion of the chain corresponds to Arg-29–Thr-45. His-46 contributes to the heme b binding site. A helical transmembrane segment spans residues His-46–Ile-63. Over Lys-64 to Ser-85 the chain is Cytoplasmic. A helical membrane pass occupies residues Leu-86–Met-106. At Ala-107–Trp-141 the chain is on the periplasmic side. Positions 138 and 152 each coordinate heme b. Residues Ala-142–Ile-162 traverse the membrane as a helical segment. At Gln-163–Lys-176 the chain is on the cytoplasmic side.

This sequence belongs to the cytochrome b561 family. It depends on heme b as a cofactor.

It is found in the cell inner membrane. The polypeptide is Cytochrome b561 homolog 1 (yodB) (Escherichia coli (strain K12)).